Consider the following 1431-residue polypeptide: DNA polymerase II large subunit (1431 aa).

A disordered region spans residues 1388 to 1431 (LLENFANGYNKGKKEEMPKKQRKKEQEKSKKRKVISLDDFFSRK). Residues 1399-1415 (GKKEEMPKKQRKKEQEK) show a composition bias toward basic and acidic residues.

Belongs to the archaeal DNA polymerase II family. As to quaternary structure, heterodimer of a large subunit and a small subunit. This protein undergoes a protein self splicing that involves a post-translational excision of the intervening region (intein) followed by peptide ligation.

The catalysed reaction is DNA(n) + a 2'-deoxyribonucleoside 5'-triphosphate = DNA(n+1) + diphosphate. The enzyme catalyses Exonucleolytic cleavage in the 3'- to 5'-direction to yield nucleoside 5'-phosphates.. Functionally, possesses two activities: a DNA synthesis (polymerase) and an exonucleolytic activity that degrades single-stranded DNA in the 3'- to 5'-direction. Has a template-primer preference which is characteristic of a replicative DNA polymerase. The protein is DNA polymerase II large subunit (polC) of Pyrococcus horikoshii (strain ATCC 700860 / DSM 12428 / JCM 9974 / NBRC 100139 / OT-3).